Here is a 196-residue protein sequence, read N- to C-terminus: MAEQKRNRREEILQALAAMLETSPGQRITTAKLAANLGVSEAALYRHFPSKARMFEGLIEFVEDTLLTRINMIMDEEKNTLSRCHAILQLLLTFAERNPGITRVMTGDALMGEHDRLRGRMEDLFNRIESSIKQILREKAMREQQRFIVDEAVLANLLLSYADGKISQFVRSNFKRLPTEHFSAQWQVMEQQLISA.

The 61-residue stretch at 6–66 (RNRREEILQA…GLIEFVEDTL (61 aa)) folds into the HTH tetR-type domain. A DNA-binding region (H-T-H motif) is located at residues 29-48 (TTAKLAANLGVSEAALYRHF). The stretch at 108–135 (DALMGEHDRLRGRMEDLFNRIESSIKQI) forms a coiled coil.

Belongs to the nucleoid occlusion factor SlmA family. As to quaternary structure, homodimer. Interacts with FtsZ.

Its subcellular location is the cytoplasm. The protein localises to the nucleoid. Functionally, required for nucleoid occlusion (NO) phenomenon, which prevents Z-ring formation and cell division over the nucleoid. Acts as a DNA-associated cell division inhibitor that binds simultaneously chromosomal DNA and FtsZ, and disrupts the assembly of FtsZ polymers. SlmA-DNA-binding sequences (SBS) are dispersed on non-Ter regions of the chromosome, preventing FtsZ polymerization at these regions. This is Nucleoid occlusion factor SlmA from Idiomarina loihiensis (strain ATCC BAA-735 / DSM 15497 / L2-TR).